The primary structure comprises 396 residues: Argininosuccinate synthase (396 aa).

ATP contacts are provided by residues 10-18 (AYSGGLDTS) and A37. L-citrulline-binding residues include Y88 and S93. G118 serves as a coordination point for ATP. Residues T120, N124, and D125 each coordinate L-aspartate. N124 is an L-citrulline binding site. Residues R128, S176, S185, E261, and Y273 each coordinate L-citrulline.

This sequence belongs to the argininosuccinate synthase family. Type 1 subfamily. As to quaternary structure, homotetramer.

The protein resides in the cytoplasm. The catalysed reaction is L-citrulline + L-aspartate + ATP = 2-(N(omega)-L-arginino)succinate + AMP + diphosphate + H(+). It participates in amino-acid biosynthesis; L-arginine biosynthesis; L-arginine from L-ornithine and carbamoyl phosphate: step 2/3. The protein is Argininosuccinate synthase of Nitratidesulfovibrio vulgaris (strain ATCC 29579 / DSM 644 / CCUG 34227 / NCIMB 8303 / VKM B-1760 / Hildenborough) (Desulfovibrio vulgaris).